A 448-amino-acid chain; its full sequence is Cyclic dof factor 3 (448 aa).

A disordered region spans residues A26 to K108. The segment covering V29–G39 has biased composition (acidic residues). Residues G40 to D54 are compositionally biased toward basic and acidic residues. Positions K55–K69 are enriched in low complexity. A compositionally biased stretch (polar residues) spans S80–D99. A Dof-type zinc finger spans residues L110 to S164. C112, C115, C137, and C140 together coordinate Zn(2+). 2 disordered regions span residues N243–G269 and S332–A370. Polar residues-rich tracts occupy residues D246–H259 and S332–T347. Residues H351–Q368 are compositionally biased toward basic and acidic residues.

In terms of assembly, interacts with ADO2 (via kelch repeats) and ADO3 (via kelch repeats). Expressed in the vasculature of cotyledons and hypocotyls, leaves and roots.

Its subcellular location is the nucleus. Functionally, transcription factor that binds specifically to a 5'-AA[AG]G-3' consensus core sequence. Regulates a photoperiodic flowering response. Transcriptional repressor of 'CONSTANS' expression. This Arabidopsis thaliana (Mouse-ear cress) protein is Cyclic dof factor 3 (CDF3).